Reading from the N-terminus, the 396-residue chain is Phosphoglycerate kinase (396 aa).

Substrate is bound by residues 22–24, Arg37, 60–63, Arg118, and Arg151; these read DLN and HFGR. Residues Lys201, Glu323, and 353 to 356 each bind ATP; that span reads GGDT.

The protein belongs to the phosphoglycerate kinase family. Monomer.

It localises to the cytoplasm. It carries out the reaction (2R)-3-phosphoglycerate + ATP = (2R)-3-phospho-glyceroyl phosphate + ADP. The protein operates within carbohydrate degradation; glycolysis; pyruvate from D-glyceraldehyde 3-phosphate: step 2/5. This chain is Phosphoglycerate kinase, found in Azorhizobium caulinodans (strain ATCC 43989 / DSM 5975 / JCM 20966 / LMG 6465 / NBRC 14845 / NCIMB 13405 / ORS 571).